Reading from the N-terminus, the 382-residue chain is Succinate--CoA ligase [ADP-forming] subunit beta 1 (382 aa).

The 227-residue stretch at 9-235 folds into the ATP-grasp domain; that stretch reads KQIFAKHGIR…ATEEDPLERE (227 aa). ATP is bound by residues lysine 45, 52–54, glutamate 91, leucine 94, and glutamate 99; that span reads GRG. Mg(2+)-binding residues include asparagine 191 and aspartate 204. Asparagine 255 provides a ligand contact to substrate.

Belongs to the succinate/malate CoA ligase beta subunit family. Heterotetramer of two alpha and two beta subunits. Mg(2+) is required as a cofactor.

The enzyme catalyses succinate + ATP + CoA = succinyl-CoA + ADP + phosphate. It catalyses the reaction GTP + succinate + CoA = succinyl-CoA + GDP + phosphate. It functions in the pathway carbohydrate metabolism; tricarboxylic acid cycle; succinate from succinyl-CoA (ligase route): step 1/1. Its function is as follows. Succinyl-CoA synthetase functions in the citric acid cycle (TCA), coupling the hydrolysis of succinyl-CoA to the synthesis of either ATP or GTP and thus represents the only step of substrate-level phosphorylation in the TCA. The beta subunit provides nucleotide specificity of the enzyme and binds the substrate succinate, while the binding sites for coenzyme A and phosphate are found in the alpha subunit. The sequence is that of Succinate--CoA ligase [ADP-forming] subunit beta 1 from Archaeoglobus fulgidus (strain ATCC 49558 / DSM 4304 / JCM 9628 / NBRC 100126 / VC-16).